The sequence spans 458 residues: RuvB-like protein 1 (458 aa).

73–80 (GPPGTGKT) contacts ATP.

The protein belongs to the RuvB family. As to quaternary structure, interacts with FRI, and with FLX and FES1, two component of the transcription activator complex FRI-C. Interacts with the disease resistance genes RPM1 and RPP5.

The protein localises to the nucleus. The enzyme catalyses ATP + H2O = ADP + phosphate + H(+). Proposed core component of the chromatin remodeling INO80 complex which is involved in transcriptional regulation, DNA replication and probably DNA repair. Component of the NuA4 histone acetyltransferase complex which is involved in transcriptional activation of select genes principally by acetylation of nucleosomal histones H4 and H2A. Has single-stranded DNA-stimulated ATPase and ATP-dependent DNA helicase (3' to 5') activity suggesting a role in nuclear processes such as recombination and transcription. The sequence is that of RuvB-like protein 1 (RIN1) from Arabidopsis thaliana (Mouse-ear cress).